The following is a 500-amino-acid chain: MGLLTGDTLGPLAVAVAIFLLLVDLMHRRRRWATRYPPGPTPVPMVGNLLQMDFQEPICYFSQLQGRFGNVFSLELAWTPVVVLNGLEAVREALVHRSEDTADRPPMPIYDHLGLGPESQGLFLARYGRAWREQRRFSLSTLRNFGLGRKSLEQWVTEEASCLCAAFAEQAGRPFGPGALLNKAVSNVISSLTYGRRFEYDDPRLLQLLELTQQALKQDSGFLREALNSIPVLLHIPGLASKVFSAQKAIITLTNEMIQEHRKTRDPTQPPRHLIDAFVDEIEKAKGNPKTSFNEENLCMVTSDLFIAGMVSTSITLTWALLLMILHPDVQRRVQQEIDEVIGREQLPEMGDQTRMPFTVAVIHEVQRFGDIVPLGVPHMTSRDTEVQGFLIPKGTTLITNLSSVLKDEKVWKKPFRFYPEHFLDAQGHFVKHEAFMPFSAGRRVCLGEPLARMELFLFFTCLLQRFSFSVPAGQPRPSDHGVFTFLKVPAPFQLCVEPR.

C446 provides a ligand contact to heme.

Belongs to the cytochrome P450 family. Heme is required as a cofactor. In terms of tissue distribution, liver. Also detected in several other tissues.

The protein resides in the endoplasmic reticulum membrane. The protein localises to the microsome membrane. The enzyme catalyses an organic molecule + reduced [NADPH--hemoprotein reductase] + O2 = an alcohol + oxidized [NADPH--hemoprotein reductase] + H2O + H(+). High activity for the hydroxylation of bunitrolol and imipramine; low activity on debrisoquine. This Canis lupus familiaris (Dog) protein is Cytochrome P450 2D15 (CYP2D15).